Reading from the N-terminus, the 517-residue chain is Synaptic vesicular amine transporter (517 aa).

The Cytoplasmic segment spans residues 1 to 20; it reads MALSELALLRRLQESRHSRK. The helical transmembrane segment at 21 to 41 threads the bilayer; sequence LILFIVFLALLLDNMLLTVVV. The Extracellular segment spans residues 42 to 132; that stretch reads PIIPSYLYSI…EDKDLLNENV (91 aa). Asn-84, Asn-91, and Asn-112 each carry an N-linked (GlcNAc...) asparagine glycan. Cys-120 and Cys-327 are oxidised to a cystine. A helical membrane pass occupies residues 133–153; the sequence is QVGLLFASKATVQLLTNPFIG. Over 154–162 the chain is Cytoplasmic; the sequence is LLTNRIGYP. Residues 163-183 form a helical membrane-spanning segment; that stretch reads IPMFTGFCIMFISTVMFAFSR. At 184-192 the chain is on the extracellular side; sequence TYAFLLIAR. Residues 193–213 traverse the membrane as a helical segment; it reads SLQGIGSSCSSVAGMGMLASV. At 214–222 the chain is on the cytoplasmic side; it reads YTDDEERGN. Residues 223–245 traverse the membrane as a helical segment; it reads AMGIALGGLAMGVLVGPPFGSVL. 2 residues coordinate serotonin: Leu-231 and Val-235. At 246–251 the chain is on the extracellular side; it reads YEFVGK. The chain crosses the membrane as a helical span at residues 252–274; that stretch reads TAPFLVLAALVLLDGAIQLFVLQ. Residues 275 to 294 lie on the Cytoplasmic side of the membrane; it reads PSRVQPESQKGTPLTTLLRD. The chain crosses the membrane as a helical span at residues 295–314; it reads PYILIAAGSICFANMGIAML. Positions 308, 311, 315, 337, and 344 each coordinate serotonin. Topologically, residues 315–331 are extracellular; that stretch reads EPALPIWMMETMCSHKW. Residues 332–355 traverse the membrane as a helical segment; the sequence is QLGVAFLPASVSYLIGTNVFGILA. Residues 356 to 360 lie on the Cytoplasmic side of the membrane; that stretch reads HKMGR. A helical transmembrane segment spans residues 361-381; that stretch reads WLCALLGMIIVGMSILCIPLA. Topologically, residues 382-392 are extracellular; the sequence is KNIYGLIAPNF. Residues 393–413 form a helical membrane-spanning segment; that stretch reads GVGFAIGMVDSSMMPIMGYLV. Asp-402 is a serotonin binding site. Over 414-417 the chain is Cytoplasmic; the sequence is DLRH. The chain crosses the membrane as a helical span at residues 418–438; the sequence is VSVYGSVYAIADVAFCMGYAI. Tyr-436 is a binding site for serotonin. Residues 439 to 443 are Extracellular-facing; the sequence is GPSAG. Residues 444–465 traverse the membrane as a helical segment; sequence GAIAKAIGFPWLMTIIGIIDIL. The Cytoplasmic portion of the chain corresponds to 466 to 517; the sequence is FAPLCFFLRSPPAKEEKMAILMDHNCPIKTKMYTQNSSQSHPIGEDEESESD. Residues Ser-514 and Ser-516 each carry the phosphoserine; by CK2 modification.

Belongs to the major facilitator superfamily. Vesicular transporter family. As to quaternary structure, interacts with SLC6A3.

The protein resides in the cytoplasmic vesicle. It localises to the secretory vesicle. The protein localises to the synaptic vesicle membrane. Its subcellular location is the secretory vesicle membrane. It is found in the cell projection. The protein resides in the axon. It localises to the dendrite. The catalysed reaction is serotonin(in) + 2 H(+)(out) = serotonin(out) + 2 H(+)(in). The enzyme catalyses dopamine(in) + 2 H(+)(out) = dopamine(out) + 2 H(+)(in). It catalyses the reaction histamine(in) + 2 H(+)(out) = histamine(out) + 2 H(+)(in). With respect to regulation, strongly inhibited by reserpine and tetrabenazine. Also inhibited to a lesser extent by ketanserin and fenfluramine. Reserpine and ketanserin inhibit by blocking the substrate-binding pocket. Tetrabenazine traps SLC18A2/VMAT2 in an occluded conformation and its inhibition is specific to SLC18A2/VMAT2 but not SLC18A1/VMAT1. Electrogenic antiporter that exchanges one cationic monoamine with two intravesicular protons across the membrane of secretory and synaptic vesicles. Uses the electrochemical proton gradient established by the V-type proton-pump ATPase to accumulate high concentrations of monoamines inside the vesicles prior to their release via exocytosis. Transports a variety of catecholamines such as dopamine, adrenaline and noradrenaline, histamine, and indolamines such as serotonin. Regulates the transvesicular monoaminergic gradient that determines the quantal size. Mediates somatodendritic dopamine release in hippocampal neurons, likely as part of a regulated secretory pathway that integrates retrograde synaptic signals. Acts as a primary transporter for striatal dopamine loading ensuring impulse-dependent release of dopamine at the synaptic cleft. Responsible for histamine and serotonin storage and subsequent corelease from mast cell granules. The sequence is that of Synaptic vesicular amine transporter (SLC18A2) from Bos taurus (Bovine).